The following is a 452-amino-acid chain: Gamma conglutin 1 (452 aa).

The signal sequence occupies residues 1-33 (MAKNMAPILHILVISLSYSFLFVTSSSQNSQSL). The region spanning 61 to 432 (HWGNILKRTP…DLARSRVGFN (372 aa)) is the Peptidase A1 domain. 5 disulfides stabilise this stretch: Cys89–Cys179, Cys103–Cys116, Cys108–Cys134, Cys119–Cys129, and Cys353–Cys394. A glycan (N-linked (GlcNAc...) asparagine) is linked at Asn131.

This sequence belongs to the peptidase A1 family. As to quaternary structure, two-subunit monomeric unit made of alpha and beta subunits coupled by disulfide bonds (at pH 4.5 and under non-reducing conditions). Monomeric alpha and beta subunits in reducing conditions. Can also form oligomers including dimer, tetramer and cyclic hexamer (trimer of dimers) (at pH &gt; 5.5). Component of globulins complexes which accumulate in seeds. Interacts with flavonoids (e.g. apigenin glucosides) present in globulins complexes. Glycosylated on alpha chain at Asn-131; identified N-glycans bound are Man(2)(Xyl)(Fuc)GlcNAc(2), Man(3)(Xyl)(Fuc)GlcNAc(2), GlcNAcMan(3)(Xyl)(Fuc)GlcNAc(2) and GlcNAc(2)Man(3)(Xyl)(Fuc)GlcNAc(2). Expressed in developing seeds and in the young roots and cotyledons of germinating seeds and young seedlings.

The protein resides in the secreted. It localises to the extracellular space. In terms of biological role, sulfur-rich seed storage protein that remains undegraded at germination. The uncleaved form exhibits some inhibitory activity against GH11 xylanase from T.longibrachiatum, more at pH 7 than at pH 5.3, but not against GH12 xyloglucan-specific endoglucanase (XEG) from A.aculeatus. Binds to model phospholipid membranes containing dimyristoyl phosphatidylglycerol (DMPG), dioleoyl phosphatidic acid (DOPA) or mixture of dimyristoyl phosphatidylcholine and dimyristoyl phosphatidylglycerol (DMPC:DMPG), or mixture of dioleoyl phosphatidic acid and dioleoyl phosphatidylcholine (DOPC:DOPA). The polypeptide is Gamma conglutin 1 (Lupinus albus (White lupine)).